Here is a 447-residue protein sequence, read N- to C-terminus: UDP-glycosyltransferase 79B10 (447 aa).

UDP-alpha-D-glucose is bound by residues S260, 319–321, 336–344, and 358–361; these read VQQ, HCGFGSMWE, and LADQ.

It belongs to the UDP-glycosyltransferase family.

This is UDP-glycosyltransferase 79B10 (UGT79B10) from Arabidopsis thaliana (Mouse-ear cress).